An 80-amino-acid chain; its full sequence is Cell division topological specificity factor (80 aa).

The protein belongs to the MinE family.

Its function is as follows. Prevents the cell division inhibition by proteins MinC and MinD at internal division sites while permitting inhibition at polar sites. This ensures cell division at the proper site by restricting the formation of a division septum at the midpoint of the long axis of the cell. This Wolinella succinogenes (strain ATCC 29543 / DSM 1740 / CCUG 13145 / JCM 31913 / LMG 7466 / NCTC 11488 / FDC 602W) (Vibrio succinogenes) protein is Cell division topological specificity factor.